Here is a 321-residue protein sequence, read N- to C-terminus: Ribose-phosphate pyrophosphokinase 2 (321 aa).

Aspartate 130, histidine 132, and aspartate 145 together coordinate Mg(2+). Serine 172 bears the Phosphoserine mark.

It belongs to the ribose-phosphate pyrophosphokinase family.

It localises to the cytoplasm. The catalysed reaction is D-ribose 5-phosphate + ATP = 5-phospho-alpha-D-ribose 1-diphosphate + AMP + H(+). It participates in metabolic intermediate biosynthesis; 5-phospho-alpha-D-ribose 1-diphosphate biosynthesis; 5-phospho-alpha-D-ribose 1-diphosphate from D-ribose 5-phosphate (route I): step 1/1. Functionally, 5-phosphoribose 1-diphosphate synthase involved in nucleotide, histidine, and tryptophan biosynthesis. Active in heteromultimeric complexes with other 5-phosphoribose 1-diphosphate synthases. This is Ribose-phosphate pyrophosphokinase 2 from Schizosaccharomyces pombe (strain 972 / ATCC 24843) (Fission yeast).